The following is a 330-amino-acid chain: Aspartate--ammonia ligase (330 aa).

The protein belongs to the class-II aminoacyl-tRNA synthetase family. AsnA subfamily.

It is found in the cytoplasm. The enzyme catalyses L-aspartate + NH4(+) + ATP = L-asparagine + AMP + diphosphate + H(+). It participates in amino-acid biosynthesis; L-asparagine biosynthesis; L-asparagine from L-aspartate (ammonia route): step 1/1. This Streptococcus pyogenes serotype M3 (strain ATCC BAA-595 / MGAS315) protein is Aspartate--ammonia ligase.